The following is a 610-amino-acid chain: Chitinase 63 (610 aa).

The N-terminal stretch at 1–30 (MRFRHKAAALAATLALPLAGLVGLASPAQA) is a signal peptide. In terms of domain architecture, CBM2 spans 31 to 134 (ATSATATFQK…KINGGSCDGS (104 aa)). Disordered stretches follow at residues 125-153 (KING…ASNI) and 208-239 (ARDT…PNPG). Residues 144-229 (APGTPTASNI…GSVKVTTTGG (86 aa)) form the Fibronectin type-III domain. The segment covering 213-224 (DQTGPASGSVKV) has biased composition (polar residues). The GH18 domain occupies 241-610 (EVKMGYFTNW…LVSAIDSGLK (370 aa)). Chitin-binding positions include 313–314 (DQ) and 340–343 (GGWT). Residue E383 is the Proton donor of the active site. Residues Y384, 450–453 (MTYD), and W590 contribute to the chitin site.

It belongs to the glycosyl hydrolase 18 family. Chitinase class II subfamily.

It catalyses the reaction Random endo-hydrolysis of N-acetyl-beta-D-glucosaminide (1-&gt;4)-beta-linkages in chitin and chitodextrins.. This Streptomyces plicatus protein is Chitinase 63 (chtA).